The sequence spans 562 residues: NAD-dependent malic enzyme (562 aa).

The active-site Proton donor is tyrosine 101. Arginine 154 is a binding site for NAD(+). Lysine 172 (proton acceptor) is an active-site residue. Glutamate 243, aspartate 244, and aspartate 267 together coordinate a divalent metal cation. 2 residues coordinate NAD(+): aspartate 267 and asparagine 415.

Belongs to the malic enzymes family. Homotetramer. It depends on Mg(2+) as a cofactor. Mn(2+) serves as cofactor.

It carries out the reaction (S)-malate + NAD(+) = pyruvate + CO2 + NADH. It catalyses the reaction oxaloacetate + H(+) = pyruvate + CO2. The sequence is that of NAD-dependent malic enzyme from Aliivibrio fischeri (strain MJ11) (Vibrio fischeri).